A 78-amino-acid chain; its full sequence is Large ribosomal subunit protein eL20 (78 aa).

This sequence belongs to the eukaryotic ribosomal protein eL20 family. As to quaternary structure, part of the 50S ribosomal subunit. Binds 23S rRNA.

The protein is Large ribosomal subunit protein eL20 of Methanothermobacter thermautotrophicus (strain ATCC 29096 / DSM 1053 / JCM 10044 / NBRC 100330 / Delta H) (Methanobacterium thermoautotrophicum).